Reading from the N-terminus, the 440-residue chain is Enolase 1-2 (440 aa).

Residues H160 and E169 each contribute to the substrate site. Catalysis depends on E212, which acts as the Proton donor. Residues D247, E296, and D321 each contribute to the Mg(2+) site. Residues E296 and D321 each coordinate substrate. Residue K346 is the Proton acceptor of the active site. Substrate is bound by residues 373-376 (SHRS) and K397.

The protein belongs to the enolase family. Homodimer. Requires Mg(2+) as cofactor.

Its subcellular location is the cytoplasm. It catalyses the reaction (2R)-2-phosphoglycerate = phosphoenolpyruvate + H2O. It functions in the pathway carbohydrate degradation; glycolysis; pyruvate from D-glyceraldehyde 3-phosphate: step 4/5. This Schizosaccharomyces pombe (strain 972 / ATCC 24843) (Fission yeast) protein is Enolase 1-2 (eno102).